A 322-amino-acid chain; its full sequence is Ornithine carbamoyltransferase (322 aa).

Carbamoyl phosphate is bound by residues 67-70 (STRT), Q94, R118, and 145-148 (HPCQ). Residues N176, D240, and 244 to 245 (SM) each bind L-ornithine. Residues 280 to 281 (CL) and R308 contribute to the carbamoyl phosphate site.

This sequence belongs to the aspartate/ornithine carbamoyltransferase superfamily. OTCase family.

It is found in the cytoplasm. The catalysed reaction is carbamoyl phosphate + L-ornithine = L-citrulline + phosphate + H(+). It participates in amino-acid biosynthesis; L-arginine biosynthesis; L-arginine from L-ornithine and carbamoyl phosphate: step 1/3. In terms of biological role, reversibly catalyzes the transfer of the carbamoyl group from carbamoyl phosphate (CP) to the N(epsilon) atom of ornithine (ORN) to produce L-citrulline. The sequence is that of Ornithine carbamoyltransferase from Oceanobacillus iheyensis (strain DSM 14371 / CIP 107618 / JCM 11309 / KCTC 3954 / HTE831).